We begin with the raw amino-acid sequence, 71 residues long: UPF0352 protein Swoo_2786 (71 aa).

Belongs to the UPF0352 family.

This Shewanella woodyi (strain ATCC 51908 / MS32) protein is UPF0352 protein Swoo_2786.